The sequence spans 158 residues: S-ribosylhomocysteine lyase (158 aa).

3 residues coordinate Fe cation: histidine 54, histidine 58, and cysteine 124.

The protein belongs to the LuxS family. As to quaternary structure, homodimer. Fe cation is required as a cofactor.

The enzyme catalyses S-(5-deoxy-D-ribos-5-yl)-L-homocysteine = (S)-4,5-dihydroxypentane-2,3-dione + L-homocysteine. Functionally, involved in the synthesis of autoinducer 2 (AI-2) which is secreted by bacteria and is used to communicate both the cell density and the metabolic potential of the environment. The regulation of gene expression in response to changes in cell density is called quorum sensing. Catalyzes the transformation of S-ribosylhomocysteine (RHC) to homocysteine (HC) and 4,5-dihydroxy-2,3-pentadione (DPD). This is S-ribosylhomocysteine lyase from Limosilactobacillus reuteri (Lactobacillus reuteri).